Consider the following 423-residue polypeptide: Acetylornithine aminotransferase, mitochondrial (423 aa).

A mitochondrion-targeting transit peptide spans 1–13 (MFKRYLSSTSSRR). Lysine 276 is modified (N6-(pyridoxal phosphate)lysine).

It belongs to the class-III pyridoxal-phosphate-dependent aminotransferase family. It depends on pyridoxal 5'-phosphate as a cofactor.

The protein localises to the mitochondrion matrix. The catalysed reaction is N(2)-acetyl-L-ornithine + 2-oxoglutarate = N-acetyl-L-glutamate 5-semialdehyde + L-glutamate. Its pathway is amino-acid biosynthesis; L-arginine biosynthesis; N(2)-acetyl-L-ornithine from L-glutamate: step 4/4. In terms of biological role, catalyzes the conversion of N-acetylglutamate-gamma-semialdehyde (NAGSA) to N-acetylornithine in arginine biosynthesis. The sequence is that of Acetylornithine aminotransferase, mitochondrial (ARG8) from Saccharomyces cerevisiae (strain ATCC 204508 / S288c) (Baker's yeast).